A 200-amino-acid chain; its full sequence is Recombination protein RecR (200 aa).

The segment at 58 to 75 adopts a C4-type zinc-finger fold; it reads CSTCFCLKNLPESNCEFC. The 96-residue stretch at 82 to 177 folds into the Toprim domain; it reads STLCIVATPK…SISRLALGLP (96 aa).

It belongs to the RecR family.

In terms of biological role, may play a role in DNA repair. It seems to be involved in an RecBC-independent recombinational process of DNA repair. It may act with RecF and RecO. This is Recombination protein RecR from Chlamydia caviae (strain ATCC VR-813 / DSM 19441 / 03DC25 / GPIC) (Chlamydophila caviae).